A 962-amino-acid chain; its full sequence is Ran-binding proteins 9/10 homolog (962 aa).

Low complexity-rich tracts occupy residues 1–33 and 41–52; these read MENV…LSQS and APSTSRSHSHSP. Disordered stretches follow at residues 1–246, 271–296, and 313–402; these read MENV…EQQP, EDDD…EVAS, and SSAS…QGVD. Over residues 80 to 91 the composition is skewed to basic and acidic residues; the sequence is TEARENSPHDHS. Residues 118–132 are compositionally biased toward low complexity; it reads QQQQEAPPLQQDQQE. Residues 146-164 are compositionally biased toward polar residues; that stretch reads DQQNQEYPAVHQDQQAEQN. Residues 165–202 are compositionally biased toward basic and acidic residues; the sequence is QELHHIEGLIRHRESQNPEEHPPQASLENRETLGREDT. The segment covering 236–245 has biased composition (polar residues); sequence SGSQDLNEQQ. Residues 271–284 are compositionally biased toward acidic residues; the sequence is EDDDEEVDEEEEVV. Over residues 321–343 the composition is skewed to low complexity; that stretch reads SSNNNNNNISNHNNNNNNSNSNS. 2 stretches are compositionally biased toward polar residues: residues 351-360 and 368-378; these read FYSNNGSHFS and NPRSSTQTSSP. Phosphoserine is present on residues Ser387, Ser393, and Ser395. A compositionally biased stretch (polar residues) spans 389 to 398; the sequence is PAASSNSPQH. The region spanning 400-587 is the B30.2/SPRY domain; that stretch reads GVDPLRLLYP…VDANFGQEPF (188 aa). One can recognise a LisH domain in the interval 617 to 649; sequence PENLMNRLVSTYLVHNAFSKTAEAFNGYTNQTF. The region spanning 655-712 is the CTLH domain; the sequence is SIKTRQKIIKLILTGKMSQAIEHTLRSFPGLLENNKNLWFALKCRQFIEMINGADIEN. The interval 800-820 is disordered; it reads EMEPCQSHSNGGDSSSNGNAS. Low complexity predominate over residues 806-820; that stretch reads SHSNGGDSSSNGNAS.

It belongs to the RANBP9/10 family. In terms of tissue distribution, expressed in the GSCs and in dividing cysts. Expression is reduced in the germline as individual egg chambers are formed. Isoform C is expressed in all somatic and germline cells of the ovary. Isoform D is expressed in the GSC niche.

The protein resides in the cytoplasm. The protein localises to the membrane. It is found in the nucleus. Functionally, may be involved in JAK/STAT signaling. Isoform D is required for the proper arrangement of niche cells and is autonomously required for proper niche cell size, isoform C negatively regulates the adhesive properties of the niche. The germline stem cell (GSC) niche in ovaries is made up of two somatic cell types: 8-9 cells in a single-filed array make up the terminal filament (TF), and a tight cluster of 5 or 6 cap cells (CpC). Regulating the size and adhesive properties of the CpCs is an important component of the mechanism that controls their capacity to support stem cells, isoform C and isoform D are important factors in mediating this regulation. In contrast, isoform C acts as a positive regulator of cell adhesion in follicle cell epithelium. The chain is Ran-binding proteins 9/10 homolog (RanBPM) from Drosophila melanogaster (Fruit fly).